The primary structure comprises 686 residues: Translation initiation factor IF-2 (686 aa).

The segment at 61-98 (FEVEEKVVRSKKNSNKKKKKGKGNEDKRQENFAGRQQT) is disordered. Over residues 69–81 (RSKKNSNKKKKKG) the composition is skewed to basic residues. The tr-type G domain maps to 188-357 (ERPAVVTIMG…LLVSEVEEYK (170 aa)). The segment at 197–204 (GHVDHGKT) is G1. Residue 197-204 (GHVDHGKT) participates in GTP binding. The segment at 222–226 (GITQH) is G2. The tract at residues 243-246 (DTPG) is G3. GTP-binding positions include 243-247 (DTPGH) and 297-300 (NKMD). The G4 stretch occupies residues 297–300 (NKMD). Residues 333 to 335 (SAI) form a G5 region.

It belongs to the TRAFAC class translation factor GTPase superfamily. Classic translation factor GTPase family. IF-2 subfamily.

It localises to the cytoplasm. In terms of biological role, one of the essential components for the initiation of protein synthesis. Protects formylmethionyl-tRNA from spontaneous hydrolysis and promotes its binding to the 30S ribosomal subunits. Also involved in the hydrolysis of GTP during the formation of the 70S ribosomal complex. This chain is Translation initiation factor IF-2, found in Bacillus cereus (strain B4264).